A 571-amino-acid chain; its full sequence is Gag-Pro polyprotein (571 aa).

Gly-2 carries the N-myristoyl glycine; by host lipid modification. The short motif at 100-103 (PPPY) is the PPXY motif element. Repeats lie at residues 342–362 (PPPG…DCPT) and 367–387 (PPPG…DCPT). 2 CCHC-type zinc fingers span residues 345–362 (GPCY…DCPT) and 370–387 (GPCP…DCPT). The region spanning 447–525 (ALMLVDTGAE…DKWQILGRDV (79 aa)) is the Peptidase A2 domain. The active-site Protease; shared with dimeric partner is Asp-452.

In terms of assembly, homodimer; the homodimers are part of the immature particles. Interacts with human TSG101 and NEDD4; these interactions are essential for budding and release of viral particles. Homodimer; further assembles as homohexamers. In terms of processing, specific enzymatic cleavages by the viral protease yield mature proteins. The polyprotein is cleaved during and after budding, this process is termed maturation. The protease is autoproteolytically processed at its N- and C-termini. Gag polyprotein: Myristoylated. Myristoylation of the matrix (MA) domain mediates the transport and binding of Gag polyproteins to the host plasma membrane and is required for the assembly of viral particles.

It is found in the virion. Functionally, the matrix domain targets Gag, Gag-Pro and Gag-Pro-Pol polyproteins to the plasma membrane via a multipartite membrane binding signal, that includes its myristoylated N-terminus. Its function is as follows. Matrix protein. In terms of biological role, forms the spherical core of the virus that encapsulates the genomic RNA-nucleocapsid complex. Binds strongly to viral nucleic acids and promote their aggregation. Also destabilizes the nucleic acids duplexes via highly structured zinc-binding motifs. Functionally, the aspartyl protease mediates proteolytic cleavages of Gag and Gag-Pol polyproteins during or shortly after the release of the virion from the plasma membrane. Cleavages take place as an ordered, step-wise cascade to yield mature proteins. This process is called maturation. Displays maximal activity during the budding process just prior to particle release from the cell. The polypeptide is Gag-Pro polyprotein (Bos taurus (Bovine)).